Consider the following 400-residue polypeptide: Putative F-box protein At5g41510 (400 aa).

The F-box domain maps to Ala-2 to Val-47.

The protein is Putative F-box protein At5g41510 of Arabidopsis thaliana (Mouse-ear cress).